We begin with the raw amino-acid sequence, 166 residues long: PTS system glucose-specific EIIA component (166 aa).

Residues 34–138 (DPVFAQKMMG…SVISPIIITN (105 aa)) form the PTS EIIA type-1 domain. Zn(2+) contacts are provided by His71 and His86. His86 acts as the Tele-phosphohistidine intermediate; for EIIA activity in catalysis. His86 carries the post-translational modification Phosphohistidine; by HPr.

Heterodimer with glycerol kinase (glpk). Zn(2+) is required as a cofactor.

The protein resides in the cytoplasm. Its function is as follows. The phosphoenolpyruvate-dependent sugar phosphotransferase system (sugar PTS), a major carbohydrate active transport system, catalyzes the phosphorylation of incoming sugar substrates concomitantly with their translocation across the cell membrane. The enzyme II complex composed of PtsG and Crr is involved in glucose transport. This is PTS system glucose-specific EIIA component (crr) from Staphylococcus aureus (strain MRSA252).